The primary structure comprises 287 residues: Flagellin (287 aa).

This sequence belongs to the bacterial flagellin family.

The protein localises to the secreted. Its subcellular location is the bacterial flagellum. Its function is as follows. Flagellin is the subunit protein which polymerizes to form the filaments of bacterial flagella. This chain is Flagellin (flaA), found in Listeria innocua serovar 6a (strain ATCC BAA-680 / CLIP 11262).